A 256-amino-acid polypeptide reads, in one-letter code: UPF0246 protein HRM2_41860 (256 aa).

It belongs to the UPF0246 family.

The polypeptide is UPF0246 protein HRM2_41860 (Desulforapulum autotrophicum (strain ATCC 43914 / DSM 3382 / VKM B-1955 / HRM2) (Desulfobacterium autotrophicum)).